We begin with the raw amino-acid sequence, 383 residues long: Na(+)/H(+) antiporter NhaA (383 aa).

11 helical membrane-spanning segments follow: residues Leu-10–Pro-30, Leu-56–Ile-76, Ile-91–Ser-111, Gly-121–Gly-141, Leu-150–Phe-170, Ser-174–Asn-194, Val-206–Ala-226, Pro-254–Ser-274, Gly-275–Val-295, Gly-327–Phe-347, and Ala-355–Leu-375.

This sequence belongs to the NhaA Na(+)/H(+) (TC 2.A.33) antiporter family.

It is found in the cell inner membrane. The enzyme catalyses Na(+)(in) + 2 H(+)(out) = Na(+)(out) + 2 H(+)(in). In terms of biological role, na(+)/H(+) antiporter that extrudes sodium in exchange for external protons. The chain is Na(+)/H(+) antiporter NhaA from Francisella tularensis subsp. novicida (strain U112).